Consider the following 778-residue polypeptide: LPS-assembly protein LptD (778 aa).

A signal peptide spans 1-23 (MKTRYSVLSVAMTAAFYTQYAQA).

It belongs to the LptD family. As to quaternary structure, component of the lipopolysaccharide transport and assembly complex. Interacts with LptE and LptA.

Its subcellular location is the cell outer membrane. Its function is as follows. Together with LptE, is involved in the assembly of lipopolysaccharide (LPS) at the surface of the outer membrane. The polypeptide is LPS-assembly protein LptD (Actinobacillus pleuropneumoniae serotype 7 (strain AP76)).